The sequence spans 170 residues: Large ribosomal subunit protein uL16 (170 aa).

This sequence belongs to the universal ribosomal protein uL16 family.

The protein is Large ribosomal subunit protein uL16 of Methanospirillum hungatei JF-1 (strain ATCC 27890 / DSM 864 / NBRC 100397 / JF-1).